The following is a 319-amino-acid chain: Adenosine receptor A3 (319 aa).

Residues 1-15 (MEADNTTETDWLNIT) lie on the Extracellular side of the membrane. N-linked (GlcNAc...) asparagine glycosylation is found at N5 and N13. The chain crosses the membrane as a helical span at residues 16–38 (YITMEAAIGLCAVVGNMLVIWVV). Topologically, residues 39–49 (KLNPTLRTTTV) are cytoplasmic. Residues 50–73 (YFIVSLALADIAVGVLVIPLAIAV) traverse the membrane as a helical segment. Residues 74–85 (SLQVKMHFYACL) are Extracellular-facing. Residues C84 and C167 are joined by a disulfide bond. A helical transmembrane segment spans residues 86–107 (FMSCVLLIFTHASIMSLLAIAV). Over 108 to 127 (HRYLRVKLTVRYRTVTTQRR) the chain is Cytoplasmic. Residues 128–149 (IWLFLGLCWLVSFLVGLTPMFG) traverse the membrane as a helical segment. Residues 150–178 (WNRKATLASSQNSSTLLCHFRSVVSLDYM) lie on the Extracellular side of the membrane. The N-linked (GlcNAc...) asparagine glycan is linked to N161. Residues 179-199 (VFFSFITWILVPLVVMCIIYL) traverse the membrane as a helical segment. The Cytoplasmic portion of the chain corresponds to 200-232 (DIFYIIRNKLSQNLTGFRETRAFYGREFKTAKS). Residues 233-256 (LFLVLFLFALCWLPLSIINFVSYF) form a helical membrane-spanning segment. Residues 257-262 (DVKIPD) lie on the Extracellular side of the membrane. The helical transmembrane segment at 263-285 (VAMCLGILLSHANSMMNPIVYAC) threads the bilayer. Over 286 to 319 (KIKKFKETYFLILRAVRLCQTSDSLDSNMEQTTE) the chain is Cytoplasmic. C304 is lipidated: S-palmitoyl cysteine.

This sequence belongs to the G-protein coupled receptor 1 family. Post-translationally, phosphorylation on Thr-317 and Thr-318 may be crucial for rapid desensitization. Phosphorylation on Thr-317 may be necessary for phosphorylation on Thr-318 to occur.

It is found in the cell membrane. Its function is as follows. Receptor for adenosine. The activity of this receptor is mediated by G proteins which inhibits adenylyl cyclase. This chain is Adenosine receptor A3 (Adora3), found in Mus musculus (Mouse).